A 678-amino-acid polypeptide reads, in one-letter code: Glycine--tRNA ligase beta subunit (678 aa).

The protein belongs to the class-II aminoacyl-tRNA synthetase family. Tetramer of two alpha and two beta subunits.

The protein resides in the cytoplasm. The enzyme catalyses tRNA(Gly) + glycine + ATP = glycyl-tRNA(Gly) + AMP + diphosphate. This is Glycine--tRNA ligase beta subunit from Streptococcus pneumoniae (strain ATCC 700669 / Spain 23F-1).